A 157-amino-acid polypeptide reads, in one-letter code: 3-dehydroquinate dehydratase (157 aa).

Catalysis depends on Tyr-24, which acts as the Proton acceptor. The substrate site is built by Asn-75, His-81, and Asp-88. His-101 acts as the Proton donor in catalysis. Substrate is bound by residues 102-103 (LS) and Arg-112.

The protein belongs to the type-II 3-dehydroquinase family. Homododecamer.

The catalysed reaction is 3-dehydroquinate = 3-dehydroshikimate + H2O. It participates in metabolic intermediate biosynthesis; chorismate biosynthesis; chorismate from D-erythrose 4-phosphate and phosphoenolpyruvate: step 3/7. Its function is as follows. Catalyzes a trans-dehydration via an enolate intermediate. The protein is 3-dehydroquinate dehydratase of Brucella abortus (strain S19).